A 227-amino-acid polypeptide reads, in one-letter code: Lipoprotein-releasing system ATP-binding protein LolD (227 aa).

The ABC transporter domain occupies 6–227 (LTSQKLYKSY…LHEGSLYARE (222 aa)). 42–49 (GPSGSGKS) contacts ATP.

It belongs to the ABC transporter superfamily. Lipoprotein translocase (TC 3.A.1.125) family. In terms of assembly, the complex is composed of two ATP-binding proteins (LolD) and two transmembrane proteins (LolC and LolE).

It is found in the cell inner membrane. Part of the ABC transporter complex LolCDE involved in the translocation of mature outer membrane-directed lipoproteins, from the inner membrane to the periplasmic chaperone, LolA. Responsible for the formation of the LolA-lipoprotein complex in an ATP-dependent manner. This is Lipoprotein-releasing system ATP-binding protein LolD from Legionella pneumophila (strain Paris).